A 506-amino-acid chain; its full sequence is 2,3-bisphosphoglycerate-independent phosphoglycerate mutase (506 aa).

Residues D13 and S63 each contribute to the Mn(2+) site. The active-site Phosphoserine intermediate is S63. Residues H124, 153–154, R183, R189, 254–257, and K330 contribute to the substrate site; these read RD and RADR. Mn(2+) is bound by residues D396, H400, D437, H438, and H456.

It belongs to the BPG-independent phosphoglycerate mutase family. In terms of assembly, monomer. Mn(2+) serves as cofactor.

The catalysed reaction is (2R)-2-phosphoglycerate = (2R)-3-phosphoglycerate. It functions in the pathway carbohydrate degradation; glycolysis; pyruvate from D-glyceraldehyde 3-phosphate: step 3/5. Functionally, catalyzes the interconversion of 2-phosphoglycerate and 3-phosphoglycerate. The sequence is that of 2,3-bisphosphoglycerate-independent phosphoglycerate mutase from Cereibacter sphaeroides (strain KD131 / KCTC 12085) (Rhodobacter sphaeroides).